A 169-amino-acid chain; its full sequence is Transcription antitermination protein NusB (169 aa).

The segment at 1–23 is disordered; the sequence is MADSKKPAIKKPVPKGDRKANRR.

It belongs to the NusB family.

Functionally, involved in transcription antitermination. Required for transcription of ribosomal RNA (rRNA) genes. Binds specifically to the boxA antiterminator sequence of the ribosomal RNA (rrn) operons. In Rhodopseudomonas palustris (strain HaA2), this protein is Transcription antitermination protein NusB.